The sequence spans 718 residues: Ribosomal RNA large subunit methyltransferase K/L (718 aa).

One can recognise a THUMP domain in the interval 44–155; it reads DAYKVCIYSH…KQYVNVFLCL (112 aa).

The protein belongs to the methyltransferase superfamily. RlmKL family.

The protein localises to the cytoplasm. It catalyses the reaction guanosine(2445) in 23S rRNA + S-adenosyl-L-methionine = N(2)-methylguanosine(2445) in 23S rRNA + S-adenosyl-L-homocysteine + H(+). The enzyme catalyses guanosine(2069) in 23S rRNA + S-adenosyl-L-methionine = N(2)-methylguanosine(2069) in 23S rRNA + S-adenosyl-L-homocysteine + H(+). In terms of biological role, specifically methylates the guanine in position 2445 (m2G2445) and the guanine in position 2069 (m7G2069) of 23S rRNA. This chain is Ribosomal RNA large subunit methyltransferase K/L, found in Francisella philomiragia subsp. philomiragia (strain ATCC 25017 / CCUG 19701 / FSC 153 / O#319-036).